We begin with the raw amino-acid sequence, 324 residues long: Zinc transporter ZIP1 (324 aa).

Topologically, residues 1-30 (MGPWGEPELLVWRPEAVASEPPVPVGLEVK) are extracellular. A helical membrane pass occupies residues 31-51 (LGALVLLLVLTLLCSLVPICV). Residues 52 to 68 (LRRPGANHEGSASRQKA) are Cytoplasmic-facing. Residues 69–89 (LSLVSCFAGGVFLATCLLDLL) traverse the membrane as a helical segment. Topologically, residues 90-104 (PDYLAAIDEALAALH) are extracellular. Residues 105-125 (VTLQFPLQEFILAMGFFLVLV) traverse the membrane as a helical segment. The Cytoplasmic segment spans residues 126–179 (MEQITLAYKEQSGPSPLEETRALLGTVNGGPQHWHDGPGVPQASGAPATPSALR). The helical transmembrane segment at 180-200 (ACVLVFSLALHSVFEGLAVGL) threads the bilayer. Over 201 to 206 (QRDRAR) the chain is Extracellular. A helical membrane pass occupies residues 207–227 (AMELCLALLLHKGILAVSLSL). At 228–237 (RLLQSHLRAQ) the chain is on the cytoplasmic side. Residues 238–258 (VVAGCGILFSCMTPLGIGLGA) form a helical membrane-spanning segment. Residues 259 to 272 (ALAESAGPLHQLAQ) lie on the Extracellular side of the membrane. A helical membrane pass occupies residues 273 to 293 (SVLEGMAAGTFLYITFLEILP). Topologically, residues 294–303 (QELASSEQRI) are cytoplasmic. Residues 304–324 (LKVILLLAGFALLTGLLFIQI) traverse the membrane as a helical segment.

The protein belongs to the ZIP transporter (TC 2.A.5) family. As to expression, ubiquitous. Expressed in most adult and fetal tissues including the epidermis.

It localises to the cell membrane. The protein localises to the endoplasmic reticulum membrane. It carries out the reaction Zn(2+)(in) = Zn(2+)(out). Its activity is regulated as follows. Inhibited by Ni(2+) ions. Fe(2+) ions do not inhibit zinc uptake. Functionally, transporter for the divalent cation Zn(2+). Mediates the influx of Zn(2+) into cells from extracellular space. Functions as the major importer of zinc from circulating blood plasma into prostate cells. This Homo sapiens (Human) protein is Zinc transporter ZIP1.